Here is a 384-residue protein sequence, read N- to C-terminus: Soluble hydrogenase, small subunit (384 aa).

Residue Lys194 is modified to N6-(pyridoxal phosphate)lysine.

The protein belongs to the class-V pyridoxal-phosphate-dependent aminotransferase family. As to quaternary structure, heterodimer of a large and a small subunit. Requires pyridoxal 5'-phosphate as cofactor.

Its subcellular location is the cytoplasm. Soluble hydrogenase catalyzes both production and consumption of hydrogen from suitable artificial electron donors or acceptors. This subunit catalyzes the tritium-exchange activity. The protein is Soluble hydrogenase, small subunit of Synechococcus sp. (strain PCC 6716).